We begin with the raw amino-acid sequence, 139 residues long: Actin-depolymerizing factor 2 (139 aa).

Residues 7–139 form the ADF-H domain; that stretch reads GLAVSDECKV…SLDIVKSRTN (133 aa).

It belongs to the actin-binding proteins ADF family. In terms of tissue distribution, expressed in pollen.

Actin-depolymerizing protein. Severs actin filaments (F-actin) and binds to actin monomers. This Zea mays (Maize) protein is Actin-depolymerizing factor 2 (ADF2).